The primary structure comprises 187 residues: Elongation factor P (187 aa).

It belongs to the elongation factor P family.

The protein resides in the cytoplasm. Its pathway is protein biosynthesis; polypeptide chain elongation. Its function is as follows. Involved in peptide bond synthesis. Stimulates efficient translation and peptide-bond synthesis on native or reconstituted 70S ribosomes in vitro. Probably functions indirectly by altering the affinity of the ribosome for aminoacyl-tRNA, thus increasing their reactivity as acceptors for peptidyl transferase. This is Elongation factor P from Mycolicibacterium gilvum (strain PYR-GCK) (Mycobacterium gilvum (strain PYR-GCK)).